Reading from the N-terminus, the 245-residue chain is 8-amino-3,8-dideoxy-manno-octulosonate cytidylyltransferase (245 aa).

This sequence belongs to the KdsB family.

The protein localises to the cytoplasm. It carries out the reaction 8-amino-3,8-dideoxy-alpha-D-manno-octulosonate + CTP = CMP-8-amino-3,8-dideoxy-alpha-D-manno-oct-2-ulosonate + diphosphate. Its pathway is bacterial outer membrane biogenesis; lipopolysaccharide biosynthesis. Activates KDO8N (a required 8-carbon sugar) for incorporation into bacterial lipopolysaccharide in the Shewanella genus. This chain is 8-amino-3,8-dideoxy-manno-octulosonate cytidylyltransferase, found in Shewanella putrefaciens (strain CN-32 / ATCC BAA-453).